The primary structure comprises 275 residues: 3-methyl-2-oxobutanoate hydroxymethyltransferase (275 aa).

The Mg(2+) site is built by aspartate 51 and aspartate 90. 3-methyl-2-oxobutanoate-binding positions include 51–52, aspartate 90, and lysine 120; that span reads DS. Glutamate 122 provides a ligand contact to Mg(2+). Glutamate 189 serves as the catalytic Proton acceptor.

The protein belongs to the PanB family. As to quaternary structure, homodecamer; pentamer of dimers. The cofactor is Mg(2+).

It localises to the cytoplasm. The catalysed reaction is 3-methyl-2-oxobutanoate + (6R)-5,10-methylene-5,6,7,8-tetrahydrofolate + H2O = 2-dehydropantoate + (6S)-5,6,7,8-tetrahydrofolate. It functions in the pathway cofactor biosynthesis; (R)-pantothenate biosynthesis; (R)-pantoate from 3-methyl-2-oxobutanoate: step 1/2. Functionally, catalyzes the reversible reaction in which hydroxymethyl group from 5,10-methylenetetrahydrofolate is transferred onto alpha-ketoisovalerate to form ketopantoate. The sequence is that of 3-methyl-2-oxobutanoate hydroxymethyltransferase from Caulobacter vibrioides (strain ATCC 19089 / CIP 103742 / CB 15) (Caulobacter crescentus).